The sequence spans 1007 residues: RNA-binding protein 26 (1007 aa).

Residue Lys94 forms a Glycyl lysine isopeptide (Lys-Gly) (interchain with G-Cter in SUMO2) linkage. Residue Lys106 forms a Glycyl lysine isopeptide (Lys-Gly) (interchain with G-Cter in SUMO1); alternate linkage. A Glycyl lysine isopeptide (Lys-Gly) (interchain with G-Cter in SUMO2); alternate cross-link involves residue Lys106. The span at 106-118 shows a compositional bias: basic and acidic residues; that stretch reads KKEEITKEEEREK. The disordered stretch occupies residues 106–241; the sequence is KKEEITKEEE…YTPVSSVPSI (136 aa). The residue at position 127 (Ser127) is a Phosphoserine. Residues 134-168 show a composition bias toward basic and acidic residues; that stretch reads RYRENRSRDERKKDDRSRKRDYDRNPPRRDSYRDR. Over residues 169–186 the composition is skewed to basic residues; that stretch reads YNRRRGRSRSYSRSRSRS. Basic and acidic residues-rich tracts occupy residues 187–201 and 209–227; these read WSKERLRERDRDRSR and RSRERDLVKPKYDLDRTDP. Over residues 228–241 the composition is skewed to polar residues; sequence LENNYTPVSSVPSI. The C3H1-type zinc-finger motif lies at 288–316; that stretch reads PMPKKRCRDYDEKGFCMRGDMCPFDHGSD. Residues 334–388 show a composition bias toward pro residues; it reads QPPVVEGPPPPGLPPPPPILTPPPVNLRPPVPPPGPLPPSLPPVTGPPPPLPPLQ. Disordered stretches follow at residues 334-404 and 460-519; these read QPPV…SSVP and IGLT…TNSP. Residues 394 to 404 are compositionally biased toward low complexity; sequence APPNSATSSVP. Position 496 is a phosphoserine (Ser496). Residue Lys510 is modified to N6-acetyllysine. Ser518 carries the phosphoserine modification. The RRM 1 domain occupies 532 to 606; that stretch reads TKLELRKVPP…RFIKVYWHRE (75 aa). Position 616 is a phosphoserine (Ser616). 2 coiled-coil regions span residues 719-795 and 823-847; these read DNNE…KAAS and KKMQAGEEVTELRRKYTELQLEAAK. Residues 853-884 form a disordered region; sequence SGRGRGIHSRGRGAVHGRGRGRGRGRGVPGHA. Positions 857 to 877 are enriched in basic residues; the sequence is RGIHSRGRGAVHGRGRGRGRG. The RRM 2 domain occupies 891-960; sequence RALEISAFTE…QDLKLAWNKP (70 aa). The interval 966 to 1007 is disordered; the sequence is AVETEEVEPDEEEFQEESLVDDSLLQDDDEEEEDNESRSWRR. Residues 968–1000 are compositionally biased toward acidic residues; it reads ETEEVEPDEEEFQEESLVDDSLLQDDDEEEEDN.

In terms of biological role, may be involved in the turnover of nuclear polyadenylated (pA+) RNA. This Homo sapiens (Human) protein is RNA-binding protein 26.